Consider the following 350-residue polypeptide: Chorismate synthase (350 aa).

NADP(+) is bound by residues arginine 39 and arginine 45. The tract at residues 85-104 (KDKKVPPVTRPRPGHADLPG) is disordered. FMN-binding positions include 119-121 (RAS), 213-214 (QG), glycine 258, 273-277 (KPIPT), and arginine 299.

Belongs to the chorismate synthase family. In terms of assembly, homotetramer. FMNH2 is required as a cofactor.

The enzyme catalyses 5-O-(1-carboxyvinyl)-3-phosphoshikimate = chorismate + phosphate. Its pathway is metabolic intermediate biosynthesis; chorismate biosynthesis; chorismate from D-erythrose 4-phosphate and phosphoenolpyruvate: step 7/7. In terms of biological role, catalyzes the anti-1,4-elimination of the C-3 phosphate and the C-6 proR hydrogen from 5-enolpyruvylshikimate-3-phosphate (EPSP) to yield chorismate, which is the branch point compound that serves as the starting substrate for the three terminal pathways of aromatic amino acid biosynthesis. This reaction introduces a second double bond into the aromatic ring system. The chain is Chorismate synthase from Caldanaerobacter subterraneus subsp. tengcongensis (strain DSM 15242 / JCM 11007 / NBRC 100824 / MB4) (Thermoanaerobacter tengcongensis).